The sequence spans 350 residues: Anthranilate phosphoribosyltransferase (350 aa).

5-phospho-alpha-D-ribose 1-diphosphate contacts are provided by residues Gly88, 91–92 (GD), Thr96, 98–101 (NIST), 116–124 (KHGGRSVSS), and Ser128. An anthranilate-binding site is contributed by Gly88. Ser100 lines the Mg(2+) pocket. Arg174 provides a ligand contact to anthranilate. Mg(2+) contacts are provided by Asp233 and Glu234.

The protein belongs to the anthranilate phosphoribosyltransferase family. In terms of assembly, homodimer. The cofactor is Mg(2+).

It carries out the reaction N-(5-phospho-beta-D-ribosyl)anthranilate + diphosphate = 5-phospho-alpha-D-ribose 1-diphosphate + anthranilate. It participates in amino-acid biosynthesis; L-tryptophan biosynthesis; L-tryptophan from chorismate: step 2/5. In terms of biological role, catalyzes the transfer of the phosphoribosyl group of 5-phosphorylribose-1-pyrophosphate (PRPP) to anthranilate to yield N-(5'-phosphoribosyl)-anthranilate (PRA). The chain is Anthranilate phosphoribosyltransferase from Albidiferax ferrireducens (strain ATCC BAA-621 / DSM 15236 / T118) (Rhodoferax ferrireducens).